We begin with the raw amino-acid sequence, 199 residues long: TATA-box-binding protein (199 aa).

2 repeat units span residues 10-86 (IENI…VKLL) and 101-177 (VQNI…YNQL).

It belongs to the TBP family.

In terms of biological role, general factor that plays a role in the activation of archaeal genes transcribed by RNA polymerase. Binds specifically to the TATA box promoter element which lies close to the position of transcription initiation. The protein is TATA-box-binding protein of Pyrobaculum islandicum (strain DSM 4184 / JCM 9189 / GEO3).